Reading from the N-terminus, the 56-residue chain is Large ribosomal subunit protein bL32 (56 aa).

A compositionally biased stretch (basic residues) spans 1–16; it reads MAVQKSKKSRSMRGMR. The interval 1-21 is disordered; it reads MAVQKSKKSRSMRGMRRSHDA.

The protein belongs to the bacterial ribosomal protein bL32 family.

This chain is Large ribosomal subunit protein bL32, found in Vibrio atlanticus (strain LGP32) (Vibrio splendidus (strain Mel32)).